A 488-amino-acid chain; its full sequence is Dipeptide and tripeptide permease A (488 aa).

Residues 1–35 (MSTANTPEDEQKPSLNAFKQPRAFYLIFSIELWER) lie on the Cytoplasmic side of the membrane. A helical transmembrane segment spans residues 36-56 (FGYYGLQGIMAVYLVKMLGMS). Residues 57–60 (EAEA) lie on the Periplasmic side of the membrane. The helical transmembrane segment at 61–81 (ITVFAAFTALVYGFVAIGGWL) threads the bilayer. Topologically, residues 82-90 (GDKILGTKR) are cytoplasmic. Residues 91–111 (VIVLGAIVLAIGYAMVAFSDH) traverse the membrane as a helical segment. Residues 112–114 (DKD) lie on the Periplasmic side of the membrane. A helical transmembrane segment spans residues 115-135 (MIYWGLATIAVGNGLFKANPS). Residues 136-154 (SLLATCYEKDDPQLDGAFT) are Cytoplasmic-facing. A helical transmembrane segment spans residues 155 to 175 (MYYMSINVGSFLSMLATPWLA). The Periplasmic segment spans residues 176 to 179 (ANYG). The chain crosses the membrane as a helical span at residues 180-200 (WDVAFALSVVGMLITLANFML). Over 201 to 219 (CRGWIKDKGSRPDFEPLNY) the chain is Cytoplasmic. A helical transmembrane segment spans residues 220 to 240 (LKLLLTLVGIVALTAVSTWLL). Position 241 (His241) is a topological domain, periplasmic. Residues 242–262 (NNEVATWSLAIISLGIILIFA) form a helical membrane-spanning segment. The Cytoplasmic segment spans residues 263–275 (RETFMMKGVARRK). A helical transmembrane segment spans residues 276–296 (MIVAFLLMVEAVVFFVLYDQM). Topologically, residues 297–324 (PTSLNFFAIHNVEHAILGFSVEPEQFQS) are periplasmic. Residues 325–345 (LNPFWIMLASPLLAAIYNFMG) form a helical membrane-spanning segment. Residues 346-353 (DKLPMPYK) lie on the Cytoplasmic side of the membrane. The helical transmembrane segment at 354–374 (FTVGMFLSATAFLVLPLGASM) threads the bilayer. At 375–391 (ANEAGIVSSWWLVASYG) the chain is on the periplasmic side. The chain crosses the membrane as a helical span at residues 392 to 412 (FQSIGELMISGLGLAMVAQLV). Over 413–415 (PQR) the chain is Cytoplasmic. The chain crosses the membrane as a helical span at residues 416–436 (LMGFIMGAWFLTSAAAAIIAG). The Periplasmic segment spans residues 437-460 (KVASLMAVPEDVQNAHASLEIYSS). Residues 461-481 (VFLQIGIVTGVIALLMLFTAP) form a helical membrane-spanning segment. At 482–488 (MLSKMTQ) the chain is on the cytoplasmic side.

It belongs to the major facilitator superfamily. Proton-dependent oligopeptide transporter (POT/PTR) (TC 2.A.17) family. DtpA subfamily.

It is found in the cell inner membrane. Proton-dependent permease that transports di- and tripeptides. The sequence is that of Dipeptide and tripeptide permease A from Proteus mirabilis (strain HI4320).